A 451-amino-acid chain; its full sequence is Gamma-aminobutyric acid receptor subunit alpha-2 (451 aa).

The signal sequence occupies residues methionine 1–alanine 28. Topologically, residues asparagine 29–lysine 249 are extracellular. A glycan (N-linked (GlcNAc...) asparagine) is linked at asparagine 38. 4-aminobutanoate is bound at residue arginine 94. N-linked (GlcNAc...) asparagine glycans are attached at residues asparagine 114 and asparagine 138. Threonine 157 serves as a coordination point for 4-aminobutanoate. A disulfide bond links cysteine 166 and cysteine 180. 3 helical membrane-spanning segments follow: residues isoleucine 250 to valine 270, alanine 281 to alanine 300, and alanine 312 to alanine 332. Residues threonine 333–methionine 420 are Cytoplasmic-facing. Residues lysine 389 to lysine 408 form a disordered region. Residues proline 396–lysine 408 are compositionally biased toward basic and acidic residues. A helical transmembrane segment spans residues serine 421 to leucine 441. Residues asparagine 442 to proline 451 lie on the Extracellular side of the membrane.

It belongs to the ligand-gated ion channel (TC 1.A.9) family. Gamma-aminobutyric acid receptor (TC 1.A.9.5) subfamily. GABRA2 sub-subfamily. Heteropentamer, formed by a combination of alpha (GABRA1-6), beta (GABRB1-3), gamma (GABRG1-3), delta (GABRD), epsilon (GABRE), rho (GABRR1-3), pi (GABRP) and theta (GABRQ) subunits, each subunit exhibiting distinct physiological and pharmacological properties. Binds UBQLN1. Interacts with KIF21B. Interacts with LHFPL4. Interacts with SHISA7; interaction leads to the regulation of GABA(A) receptor trafficking, channel deactivation kinetics and pharmacology. Glycosylated. In terms of tissue distribution, expressed in brain (at protein level).

The protein resides in the postsynaptic cell membrane. It is found in the cell membrane. Its subcellular location is the cytoplasmic vesicle membrane. It localises to the cell projection. The protein localises to the dendrite. The catalysed reaction is chloride(in) = chloride(out). Activated by pentobarbital. Inhibited by the antagonist bicuculline. Functionally, alpha subunit of the heteropentameric ligand-gated chloride channel gated by gamma-aminobutyric acid (GABA), a major inhibitory neurotransmitter in the brain. GABA-gated chloride channels, also named GABA(A) receptors (GABAAR), consist of five subunits arranged around a central pore and contain GABA active binding site(s) located at the alpha and beta subunit interface(s). When activated by GABA, GABAARs selectively allow the flow of chloride anions across the cell membrane down their electrochemical gradient. Chloride influx into the postsynaptic neuron following GABAAR opening decreases the neuron ability to generate a new action potential, thereby reducing nerve transmission. The alpha-2 subunit exhibits synaptogenic activity together with beta-2 and very little to no activity together with beta-3, the gamma-2 subunit being necessary but not sufficient to induce rapid synaptic contacts formation. This is Gamma-aminobutyric acid receptor subunit alpha-2 from Rattus norvegicus (Rat).